We begin with the raw amino-acid sequence, 423 residues long: Serine--tRNA ligase 2 (423 aa).

231–233 contacts L-serine; the sequence is TAE. 262-264 is an ATP binding site; that stretch reads RSE. Glu285 is a binding site for L-serine. 349-352 contributes to the ATP binding site; that stretch reads EISS. Ser384 contributes to the L-serine binding site.

This sequence belongs to the class-II aminoacyl-tRNA synthetase family. Type-1 seryl-tRNA synthetase subfamily. In terms of assembly, homodimer. The tRNA molecule binds across the dimer.

The protein resides in the cytoplasm. It carries out the reaction tRNA(Ser) + L-serine + ATP = L-seryl-tRNA(Ser) + AMP + diphosphate + H(+). The enzyme catalyses tRNA(Sec) + L-serine + ATP = L-seryl-tRNA(Sec) + AMP + diphosphate + H(+). Its pathway is aminoacyl-tRNA biosynthesis; selenocysteinyl-tRNA(Sec) biosynthesis; L-seryl-tRNA(Sec) from L-serine and tRNA(Sec): step 1/1. Functionally, catalyzes the attachment of serine to tRNA(Ser). Is also able to aminoacylate tRNA(Sec) with serine, to form the misacylated tRNA L-seryl-tRNA(Sec), which will be further converted into selenocysteinyl-tRNA(Sec). The protein is Serine--tRNA ligase 2 of Enterococcus faecalis (strain ATCC 700802 / V583).